The following is a 180-amino-acid chain: MIKKIGERKISFSGWSNGRSGSNDFREMYGSDACECISSNDQYTFVFSQVRTLDLIELEQLLQSVGWSRRPIRRVKKALDNSLLKVGVWQHDPKFPRLIGFARCTGDEVIQATIWDVAIHPVYQGFGLGKELMSYVLRSLKDKGIERVVLFADPGVISFYQSQGWTLEPKGNRCAFWYAN.

Residues 45–180 form the N-acetyltransferase domain; that stretch reads FVFSQVRTLD…GNRCAFWYAN (136 aa).

This sequence belongs to the acetyltransferase family. Ycf52 subfamily.

This is an uncharacterized protein from Prochlorococcus marinus (strain SARG / CCMP1375 / SS120).